The following is a 78-amino-acid chain: Small ribosomal subunit protein bS18 (78 aa).

It belongs to the bacterial ribosomal protein bS18 family. In terms of assembly, part of the 30S ribosomal subunit. Forms a tight heterodimer with protein bS6.

Its function is as follows. Binds as a heterodimer with protein bS6 to the central domain of the 16S rRNA, where it helps stabilize the platform of the 30S subunit. In Pediococcus pentosaceus (strain ATCC 25745 / CCUG 21536 / LMG 10740 / 183-1w), this protein is Small ribosomal subunit protein bS18.